The following is a 279-amino-acid chain: Arabinooligosaccharides transport system permease protein AraQ (279 aa).

6 helical membrane passes run 8-28, 79-99, 110-130, 140-160, 184-204, and 245-265; these read ILSW…VFPL, VWIS…VGYA, FFFL…MLPL, VNTY…VFFF, GIFF…MAIL, and ILLA…IFFQ. The 190-residue stretch at 75-264 folds into the ABC transmembrane type-1 domain; that stretch reads FGNSVWISIV…VPIVILFIFF (190 aa).

It belongs to the binding-protein-dependent transport system permease family. MalFG subfamily. The complex is composed of two ATP-binding proteins (MsmX), two transmembrane proteins (AraP and AraQ) and a solute-binding protein (AraN).

The protein resides in the cell membrane. Part of the ABC transporter complex AraNPQ involved in the uptake of arabinooligosaccharides. Responsible for the translocation of the substrate across the membrane. This chain is Arabinooligosaccharides transport system permease protein AraQ (araQ), found in Halalkalibacterium halodurans (strain ATCC BAA-125 / DSM 18197 / FERM 7344 / JCM 9153 / C-125) (Bacillus halodurans).